We begin with the raw amino-acid sequence, 105 residues long: UPF0235 protein Mext_2130 (105 aa).

It belongs to the UPF0235 family.

The polypeptide is UPF0235 protein Mext_2130 (Methylorubrum extorquens (strain PA1) (Methylobacterium extorquens)).